Consider the following 398-residue polypeptide: S-adenosylmethionine synthase (398 aa).

ATP is bound at residue H15. D17 serves as a coordination point for Mg(2+). Residue E43 coordinates K(+). Residues E56 and Q99 each contribute to the L-methionine site. The tract at residues 99 to 109 (QSPDIAQGVDT) is flexible loop. ATP is bound by residues 175-177 (DGK), 243-244 (RF), D252, 258-259 (RK), A275, and K279. D252 lines the L-methionine pocket. Position 283 (K283) interacts with L-methionine.

It belongs to the AdoMet synthase family. In terms of assembly, homotetramer; dimer of dimers. Mg(2+) is required as a cofactor. The cofactor is K(+).

The protein localises to the cytoplasm. It catalyses the reaction L-methionine + ATP + H2O = S-adenosyl-L-methionine + phosphate + diphosphate. It functions in the pathway amino-acid biosynthesis; S-adenosyl-L-methionine biosynthesis; S-adenosyl-L-methionine from L-methionine: step 1/1. Catalyzes the formation of S-adenosylmethionine (AdoMet) from methionine and ATP. The overall synthetic reaction is composed of two sequential steps, AdoMet formation and the subsequent tripolyphosphate hydrolysis which occurs prior to release of AdoMet from the enzyme. This chain is S-adenosylmethionine synthase, found in Parafrankia sp. (strain EAN1pec).